We begin with the raw amino-acid sequence, 155 residues long: SsrA-binding protein (155 aa).

Residues Thr135 to Lys147 show a composition bias toward basic and acidic residues. A disordered region spans residues Thr135–Arg155.

The protein belongs to the SmpB family.

The protein resides in the cytoplasm. In terms of biological role, required for rescue of stalled ribosomes mediated by trans-translation. Binds to transfer-messenger RNA (tmRNA), required for stable association of tmRNA with ribosomes. tmRNA and SmpB together mimic tRNA shape, replacing the anticodon stem-loop with SmpB. tmRNA is encoded by the ssrA gene; the 2 termini fold to resemble tRNA(Ala) and it encodes a 'tag peptide', a short internal open reading frame. During trans-translation Ala-aminoacylated tmRNA acts like a tRNA, entering the A-site of stalled ribosomes, displacing the stalled mRNA. The ribosome then switches to translate the ORF on the tmRNA; the nascent peptide is terminated with the 'tag peptide' encoded by the tmRNA and targeted for degradation. The ribosome is freed to recommence translation, which seems to be the essential function of trans-translation. The chain is SsrA-binding protein from Streptococcus pyogenes serotype M12 (strain MGAS2096).